We begin with the raw amino-acid sequence, 116 residues long: Large ribosomal subunit protein uL23 (116 aa).

Belongs to the universal ribosomal protein uL23 family. In terms of assembly, part of the 50S ribosomal subunit. Contacts protein L29, and trigger factor when it is bound to the ribosome.

Functionally, one of the early assembly proteins it binds 23S rRNA. One of the proteins that surrounds the polypeptide exit tunnel on the outside of the ribosome. Forms the main docking site for trigger factor binding to the ribosome. The protein is Large ribosomal subunit protein uL23 of Psychrobacter arcticus (strain DSM 17307 / VKM B-2377 / 273-4).